The sequence spans 276 residues: 2-dehydro-3-deoxyphosphooctonate aldolase (276 aa).

It belongs to the KdsA family.

It localises to the cytoplasm. The catalysed reaction is D-arabinose 5-phosphate + phosphoenolpyruvate + H2O = 3-deoxy-alpha-D-manno-2-octulosonate-8-phosphate + phosphate. The protein operates within carbohydrate biosynthesis; 3-deoxy-D-manno-octulosonate biosynthesis; 3-deoxy-D-manno-octulosonate from D-ribulose 5-phosphate: step 2/3. It functions in the pathway bacterial outer membrane biogenesis; lipopolysaccharide biosynthesis. The sequence is that of 2-dehydro-3-deoxyphosphooctonate aldolase from Xanthomonas oryzae pv. oryzae (strain MAFF 311018).